The following is a 275-amino-acid chain: T-cell ecto-ADP-ribosyltransferase 1 (275 aa).

The first 20 residues, 1 to 20, serve as a signal peptide directing secretion; it reads MPSNICKFFLTWWLIQQVTG. 2 disulfide bridges follow: cysteine 41–cysteine 243 and cysteine 141–cysteine 193. The N-linked (GlcNAc...) asparagine glycan is linked to asparagine 58. In terms of domain architecture, TR mART core spans 61–238; that stretch reads EKLKVAWEEA…IFLDSPKRKK (178 aa). Tyrosine 98, arginine 146, and glutamine 164 together coordinate NAD(+). The active site involves arginine 146. The active site involves serine 167. Serine 202 contributes to the NAD(+) binding site. Residue glutamate 209 is part of the active site. Serine 246 carries the GPI-anchor amidated serine lipid modification. Positions 247-275 are cleaved as a propeptide — removed in mature form; it reads SAGTRESCVSLFLVVLTSLLVQLLCLAEP.

Belongs to the Arg-specific ADP-ribosyltransferase family. Postthymic T-cells.

It is found in the cell membrane. The catalysed reaction is L-arginyl-[protein] + NAD(+) = N(omega)-(ADP-D-ribosyl)-L-arginyl-[protein] + nicotinamide + H(+). It carries out the reaction NAD(+) + H2O = ADP-D-ribose + nicotinamide + H(+). Functionally, has NAD(+) glycohydrolase activity and extremely low ADP-ribosyltransferase activity. This is T-cell ecto-ADP-ribosyltransferase 1 (Art2a) from Rattus norvegicus (Rat).